The chain runs to 293 residues: Indole-3-glycerol phosphate synthase (293 aa).

It belongs to the TrpC family.

The enzyme catalyses 1-(2-carboxyphenylamino)-1-deoxy-D-ribulose 5-phosphate + H(+) = (1S,2R)-1-C-(indol-3-yl)glycerol 3-phosphate + CO2 + H2O. The protein operates within amino-acid biosynthesis; L-tryptophan biosynthesis; L-tryptophan from chorismate: step 4/5. This chain is Indole-3-glycerol phosphate synthase, found in Rippkaea orientalis (strain PCC 8801 / RF-1) (Cyanothece sp. (strain PCC 8801)).